Reading from the N-terminus, the 254-residue chain is Triosephosphate isomerase (254 aa).

Substrate is bound at residue 10–12 (NWK). Catalysis depends on His-99, which acts as the Electrophile. The active-site Proton acceptor is the Glu-169. Residues Gly-175, Ser-215, and 236–237 (GG) each bind substrate.

The protein belongs to the triosephosphate isomerase family. As to quaternary structure, homodimer.

The protein resides in the cytoplasm. It catalyses the reaction D-glyceraldehyde 3-phosphate = dihydroxyacetone phosphate. It participates in carbohydrate biosynthesis; gluconeogenesis. The protein operates within carbohydrate degradation; glycolysis; D-glyceraldehyde 3-phosphate from glycerone phosphate: step 1/1. Involved in the gluconeogenesis. Catalyzes stereospecifically the conversion of dihydroxyacetone phosphate (DHAP) to D-glyceraldehyde-3-phosphate (G3P). In Chlamydia caviae (strain ATCC VR-813 / DSM 19441 / 03DC25 / GPIC) (Chlamydophila caviae), this protein is Triosephosphate isomerase.